The chain runs to 752 residues: Primary amine oxidase (752 aa).

The signal sequence occupies residues 1–27 (MAILSPRKTALALAVALSCAWQSPAFA). Residues 408-419 (YLDSGDYGMGTL) and 490-495 (VGNYDY) contribute to the substrate site. The active-site Proton acceptor is the Asp410. The Schiff-base intermediate with substrate; via topaquinone role is filled by Tyr493. Tyr493 carries the 2',4',5'-topaquinone modification. Residues His551 and His553 each coordinate Cu cation. Residues Asp560, Leu561, Asp562, Glu600, Tyr694, Asp697, Glu699, and Asp705 each contribute to the Ca(2+) site. Asp560 serves as a coordination point for Mn(2+). Asp562 serves as a coordination point for Mn(2+). Asp705 is a binding site for Mn(2+). His716 contacts Cu cation.

Belongs to the copper/topaquinone oxidase family. In terms of assembly, homodimer. Cu cation serves as cofactor. The cofactor is Ca(2+). It depends on L-topaquinone as a cofactor. Requires Mn(2+) as cofactor. In terms of processing, topaquinone (TPQ) is generated by copper-dependent autoxidation of a specific tyrosyl residue.

It localises to the periplasm. It catalyses the reaction a primary methyl amine + O2 + H2O = an aldehyde + H2O2 + NH4(+). Active on tyramine, tryptamine, beta-phenethylamine and dopamine. The chain is Primary amine oxidase (maoA) from Klebsiella michiganensis (strain ATCC 8724 / DSM 4798 / JCM 20051 / NBRC 3318 / NRRL B-199 / KCTC 1686 / BUCSAV 143 / CCM 1901).